A 173-amino-acid polypeptide reads, in one-letter code: NADH-ubiquinone oxidoreductase chain 6 (173 aa).

A run of 5 helical transmembrane segments spans residues 1–21, 25–45, 53–73, 87–107, and 141–161; these read MTYF…AVAS, PYFA…VLVG, LVLF…SAAL, VLGY…FFWG, and GGML…VLEL.

Belongs to the complex I subunit 6 family.

The protein localises to the mitochondrion membrane. The catalysed reaction is a ubiquinone + NADH + 5 H(+)(in) = a ubiquinol + NAD(+) + 4 H(+)(out). In terms of biological role, core subunit of the mitochondrial membrane respiratory chain NADH dehydrogenase (Complex I) that is believed to belong to the minimal assembly required for catalysis. Complex I functions in the transfer of electrons from NADH to the respiratory chain. The immediate electron acceptor for the enzyme is believed to be ubiquinone. The polypeptide is NADH-ubiquinone oxidoreductase chain 6 (MT-ND6) (Carassius auratus (Goldfish)).